A 185-amino-acid chain; its full sequence is YGAAIENGPGTQEQIWHRDQPDYALLKAGPGTAEAMLNFFTALTDFTPDTGMTQYIWGSHKRVELGEPDAEHPVVFTKLKAGDTAVLSGKIVHRGSANATPDVFRRALALMIIPAIMTPFDATCHLSRHMVETMTPLAQKMVGRRSVVIPPPHTVGAALGIWCLNMREVGEQMGLKSNQPDKEEE.

Fe cation contacts are provided by histidine 17, aspartate 19, and histidine 93.

Belongs to the PhyH family. In terms of assembly, homodimer. Fe cation is required as a cofactor.

It participates in alkaloid biosynthesis; ergot alkaloid biosynthesis. Its function is as follows. Dioxygenase; part of the gene cluster that mediates the biosynthesis of fungal ergot alkaloid ergovaline, the predominant ergopeptine product in E.festucae var. lolii. DmaW catalyzes the first step of ergot alkaloid biosynthesis by condensing dimethylallyl diphosphate (DMAP) and tryptophan to form 4-dimethylallyl-L-tryptophan. The second step is catalyzed by the methyltransferase easF that methylates 4-dimethylallyl-L-tryptophan in the presence of S-adenosyl-L-methionine, resulting in the formation of 4-dimethylallyl-L-abrine. The catalase easC and the FAD-dependent oxidoreductase easE then transform 4-dimethylallyl-L-abrine to chanoclavine-I which is further oxidized by easD in the presence of NAD(+), resulting in the formation of chanoclavine-I aldehyde. Agroclavine dehydrogenase easG then mediates the conversion of chanoclavine-I aldehyde to agroclavine via a non-enzymatic adduct reaction: the substrate is an iminium intermediate that is formed spontaneously from chanoclavine-I aldehyde in the presence of glutathione. The presence of easA is not required to complete this reaction. Further conversion of agroclavine to paspalic acid is a two-step process involving oxidation of agroclavine to elymoclavine and of elymoclavine to paspalic acid, the second step being performed by the elymoclavine oxidase cloA. Paspalic acid is then further converted to D-lysergic acid. Ergovaline is assembled from D-lysergic acid and three different amino acids by the D-lysergyl-peptide-synthetase composed of a monomudular (lpsB) and a trimodular (lpsA) nonribosomal peptide synthetase subunit. The polypeptide is Dioxygenase easH (Epichloe festucae var. lolii (Neotyphodium lolii)).